A 95-amino-acid chain; its full sequence is uncharacterized protein (95 aa).

The segment at residues 1–24 (MKKLATLTALAGALTMAVATAAQA) is a signal peptide (or 21). A compositionally biased stretch (basic and acidic residues) spans 55-89 (EGKCGADKAKSAEGKCGEGKCGADKAKSAEGKCGE). A disordered region spans residues 55 to 95 (EGKCGADKAKSAEGKCGEGKCGADKAKSAEGKCGEGKCGSK).

This is an uncharacterized protein from Haemophilus influenzae (strain ATCC 51907 / DSM 11121 / KW20 / Rd).